A 276-amino-acid polypeptide reads, in one-letter code: Elongation factor Ts (276 aa).

The tract at residues 76 to 79 (TDFV) is involved in Mg(2+) ion dislocation from EF-Tu.

Belongs to the EF-Ts family.

It is found in the cytoplasm. In terms of biological role, associates with the EF-Tu.GDP complex and induces the exchange of GDP to GTP. It remains bound to the aminoacyl-tRNA.EF-Tu.GTP complex up to the GTP hydrolysis stage on the ribosome. The chain is Elongation factor Ts from Mycobacterium leprae (strain Br4923).